Here is a 766-residue protein sequence, read N- to C-terminus: 5-methyltetrahydropteroyltriglutamate--homocysteine methyltransferase (766 aa).

5-methyltetrahydropteroyltri-L-glutamate is bound by residues 16–19 (RELK) and K122. L-homocysteine contacts are provided by residues 443–445 (IGS) and E496. L-methionine-binding positions include 443-445 (IGS) and E496. 5-methyltetrahydropteroyltri-L-glutamate-binding positions include 527 to 528 (RC) and W573. D611 contributes to the L-homocysteine binding site. An L-methionine-binding site is contributed by D611. Position 617 (E617) interacts with 5-methyltetrahydropteroyltri-L-glutamate. Zn(2+) contacts are provided by H653, C655, and E677. H706 (proton donor) is an active-site residue. C738 provides a ligand contact to Zn(2+).

This sequence belongs to the vitamin-B12 independent methionine synthase family. It depends on Zn(2+) as a cofactor.

The catalysed reaction is 5-methyltetrahydropteroyltri-L-glutamate + L-homocysteine = tetrahydropteroyltri-L-glutamate + L-methionine. The protein operates within amino-acid biosynthesis; L-methionine biosynthesis via de novo pathway; L-methionine from L-homocysteine (MetE route): step 1/1. Its function is as follows. Catalyzes the transfer of a methyl group from 5-methyltetrahydrofolate to homocysteine resulting in methionine formation. The sequence is that of 5-methyltetrahydropteroyltriglutamate--homocysteine methyltransferase from Pseudomonas putida (strain W619).